The chain runs to 366 residues: Quinolinate synthase (366 aa).

Residues His44 and Ser61 each contribute to the iminosuccinate site. [4Fe-4S] cluster is bound at residue Cys108. Iminosuccinate-binding positions include 139–141 (YIN) and Ser160. Cys228 provides a ligand contact to [4Fe-4S] cluster. Iminosuccinate is bound by residues 254 to 256 (HPE) and Thr271. A [4Fe-4S] cluster-binding site is contributed by Cys318.

Belongs to the quinolinate synthase family. Type 3 subfamily. [4Fe-4S] cluster serves as cofactor.

The protein localises to the cytoplasm. It catalyses the reaction iminosuccinate + dihydroxyacetone phosphate = quinolinate + phosphate + 2 H2O + H(+). Its pathway is cofactor biosynthesis; NAD(+) biosynthesis; quinolinate from iminoaspartate: step 1/1. Catalyzes the condensation of iminoaspartate with dihydroxyacetone phosphate to form quinolinate. The protein is Quinolinate synthase of Listeria monocytogenes serovar 1/2a (strain ATCC BAA-679 / EGD-e).